The sequence spans 195 residues: Imidazoleglycerol-phosphate dehydratase (195 aa).

The protein belongs to the imidazoleglycerol-phosphate dehydratase family.

The protein localises to the cytoplasm. The enzyme catalyses D-erythro-1-(imidazol-4-yl)glycerol 3-phosphate = 3-(imidazol-4-yl)-2-oxopropyl phosphate + H2O. It participates in amino-acid biosynthesis; L-histidine biosynthesis; L-histidine from 5-phospho-alpha-D-ribose 1-diphosphate: step 6/9. The chain is Imidazoleglycerol-phosphate dehydratase from Burkholderia pseudomallei (strain 1710b).